The chain runs to 201 residues: Putative 3-methyladenine DNA glycosylase (201 aa).

This sequence belongs to the DNA glycosylase MPG family.

The chain is Putative 3-methyladenine DNA glycosylase from Rhodopseudomonas palustris (strain HaA2).